Here is a 295-residue protein sequence, read N- to C-terminus: Adrenocorticotropic hormone receptor (295 aa).

Residues Met-1 to Ala-23 are Extracellular-facing. Residues Asn-12 and Asn-17 are each glycosylated (N-linked (GlcNAc...) asparagine). 2 cysteine pairs are disulfide-bonded: Cys-21/Cys-253 and Cys-245/Cys-251. A helical membrane pass occupies residues Val-24–Val-49. Over Ala-50 to Pro-58 the chain is Cytoplasmic. The chain crosses the membrane as a helical span at residues Met-59–Leu-79. The Extracellular segment spans residues Glu-80–Asp-104. The helical transmembrane segment at Val-105–Ala-126 threads the bilayer. Residues Asp-127–Ala-147 are Cytoplasmic-facing. The helical transmembrane segment at Leu-148 to Phe-168 threads the bilayer. Topologically, residues Ser-169–Ala-180 are extracellular. A helical membrane pass occupies residues Leu-181 to Leu-199. At Ala-200–Gly-217 the chain is on the cytoplasmic side. The chain crosses the membrane as a helical span at residues Ala-218–Phe-244. Over Cys-245 to Ser-256 the chain is Extracellular. The chain crosses the membrane as a helical span at residues Leu-257–Phe-278. The Cytoplasmic segment spans residues Arg-279–Trp-295. Cys-293 carries S-palmitoyl cysteine lipidation.

This sequence belongs to the G-protein coupled receptor 1 family. Homodimer. Interacts with corticotropin (ACTH). Interacts with MRAP; this interaction targets MC2R to the plasma membrane. Interacts with MRAP2; competing with MRAP for binding to MC2R and impairing the binding of corticotropin (ACTH). In terms of processing, ubiquitinated by MGRN1 that may be involved in post-endocytic trafficking and/or degradation of internalized receptor.

It localises to the cell membrane. In terms of biological role, hormone receptor primarily expressed in adrenal cortex that plays a key role in regulating adrenocortical function. Upon corticotropin (ACTH) binding, facilitates the release of adrenal glucocorticoids, including cortisol and corticosterone. In addition, MC2R is required for fetal and neonatal adrenal gland development. Mechanistically, activates adenylate cyclase (cAMP), the MAPK cascade as well as the cAMP-dependent protein kinase A pathway leading to steroidogenic factor 1/NR5A1-mediated transcriptional activation. This is Adrenocorticotropic hormone receptor (MC2R) from Ovis aries (Sheep).